The following is a 235-amino-acid chain: Sperm annulus positionning complex subunit Chibby3 (235 aa).

Residues M1–T41 form a disordered region. Residues S14 to P32 are compositionally biased toward low complexity. Residues L167–L181 are leucine-zipper; mediates homodimerization.

The protein belongs to the chibby family. As to quaternary structure, homodimer. Interacts with CIBAR1 (via BAR-like domain); both proteins form a ninefold symmetric structure at the flagellar base; are recruited to the annulus in a mutually dependent manner and regulate annulus positionning. In terms of tissue distribution, testis-specific.

The protein localises to the cell projection. Its subcellular location is the cilium. It localises to the flagellum. In terms of biological role, plays a key role in the correct positioning of the annulus, a septin-based ring strucure in the sperm flagellum, serving both as a physical barrier and a membrane diffusion barrier that separates the midpiece (MP) from the principal piece (PP). This positioning is essential for proper sperm motility and function. Interacts with CIBAR1 to form a complex which localizes to the curved membrane region of the flagellar pocket. By doing so, may provide stability and rigidity to the periannular membrane to prevent membrane deformation. This function is crucial for halting annulus migration at the proximal end of the fibrous sheath-containing PP. The chain is Sperm annulus positionning complex subunit Chibby3 (Cby3) from Mus musculus (Mouse).